A 119-amino-acid chain; its full sequence is BLOC-1-related complex subunit 8 (119 aa).

Serine 109 is modified (phosphoserine).

The protein belongs to the BORCS8 family. Component of the BLOC-one-related complex (BORC) which is composed of BLOC1S1, BLOC1S2, BORCS5, BORCS6, BORCS7, BORCS8, KXD1 and SNAPIN.

It localises to the lysosome membrane. Functionally, as part of the BLOC-one-related complex (BORC), it plays a role in the movement and localization of lysosomes at the cell periphery. Associated with the cytosolic face of lysosomes, BORC recruits ARL8B to the lysosomal membrane and couples lysosomes to microtubule plus-end-directed kinesin motors, driving lysosome movement toward the cell periphery. This chain is BLOC-1-related complex subunit 8, found in Homo sapiens (Human).